Here is a 263-residue protein sequence, read N- to C-terminus: tRNA pseudouridine synthase A (263 aa).

The active-site Nucleophile is D54. Y113 serves as a coordination point for substrate.

Belongs to the tRNA pseudouridine synthase TruA family. As to quaternary structure, homodimer.

The enzyme catalyses uridine(38/39/40) in tRNA = pseudouridine(38/39/40) in tRNA. Functionally, formation of pseudouridine at positions 38, 39 and 40 in the anticodon stem and loop of transfer RNAs. The polypeptide is tRNA pseudouridine synthase A (Lactobacillus helveticus (strain DPC 4571)).